Consider the following 433-residue polypeptide: Homeobox protein Hox-D3 (433 aa).

Disordered regions lie at residues S44–V198, G258–H280, and H401–L433. Residues S58–A74 are compositionally biased toward polar residues. Positions N97 to Q106 are enriched in gly residues. A compositionally biased stretch (pro residues) spans P116–P132. Positions G146–K159 are enriched in low complexity. The short motif at I161 to K166 is the Antp-type hexapeptide element. Polar residues predominate over residues N171–E183. The homeobox DNA-binding region spans S195 to Q254.

The protein belongs to the Antp homeobox family. Detected in adult kidney, but not in other adult tissues tested.

It is found in the nucleus. Its function is as follows. Sequence-specific transcription factor which is part of a developmental regulatory system that provides cells with specific positional identities on the anterior-posterior axis. The chain is Homeobox protein Hox-D3 (Hoxd3) from Mus musculus (Mouse).